The sequence spans 400 residues: Enoyl-[acyl-carrier-protein] reductase [NADH] 1 (400 aa).

Residues 48–53, 74–75, 111–112, and 139–140 each bind NAD(+); these read GASSGY, FE, DA, and LA. Tyr225 contributes to the substrate binding site. Tyr235 serves as the catalytic Proton donor. NAD(+) is bound by residues Lys244 and 273–275; that span reads VVT.

Belongs to the TER reductase family. In terms of assembly, monomer.

It carries out the reaction a 2,3-saturated acyl-[ACP] + NAD(+) = a (2E)-enoyl-[ACP] + NADH + H(+). The protein operates within lipid metabolism; fatty acid biosynthesis. In terms of biological role, involved in the final reduction of the elongation cycle of fatty acid synthesis (FAS II). Catalyzes the reduction of a carbon-carbon double bond in an enoyl moiety that is covalently linked to an acyl carrier protein (ACP). The sequence is that of Enoyl-[acyl-carrier-protein] reductase [NADH] 1 from Vibrio vulnificus (strain YJ016).